The following is a 295-amino-acid chain: Acetyl-coenzyme A carboxylase carboxyl transferase subunit beta (295 aa).

The disordered stretch occupies residues 1–20; sequence MSWLSKLMPSGIRTENTPAK. The 268-residue stretch at 28–295 folds into the CoA carboxyltransferase N-terminal domain; sequence LWEKCSNCGS…QPHPQDADAA (268 aa). Residues C32, C35, C51, and C54 each contribute to the Zn(2+) site. Residues 32–54 form a C4-type zinc finger; the sequence is CSNCGSALYGPELEENLEVCPKC.

This sequence belongs to the AccD/PCCB family. In terms of assembly, acetyl-CoA carboxylase is a heterohexamer composed of biotin carboxyl carrier protein (AccB), biotin carboxylase (AccC) and two subunits each of ACCase subunit alpha (AccA) and ACCase subunit beta (AccD). It depends on Zn(2+) as a cofactor.

It is found in the cytoplasm. It carries out the reaction N(6)-carboxybiotinyl-L-lysyl-[protein] + acetyl-CoA = N(6)-biotinyl-L-lysyl-[protein] + malonyl-CoA. Its pathway is lipid metabolism; malonyl-CoA biosynthesis; malonyl-CoA from acetyl-CoA: step 1/1. Functionally, component of the acetyl coenzyme A carboxylase (ACC) complex. Biotin carboxylase (BC) catalyzes the carboxylation of biotin on its carrier protein (BCCP) and then the CO(2) group is transferred by the transcarboxylase to acetyl-CoA to form malonyl-CoA. The protein is Acetyl-coenzyme A carboxylase carboxyl transferase subunit beta of Xanthomonas euvesicatoria pv. vesicatoria (strain 85-10) (Xanthomonas campestris pv. vesicatoria).